The primary structure comprises 564 residues: Interactor of constitutive active ROPs 3 (564 aa).

Disordered regions lie at residues Met-1–Thr-73 and Lys-88–Glu-135. Polar residues predominate over residues Glu-33–Arg-44. 2 stretches are compositionally biased toward basic and acidic residues: residues Val-63–Thr-73 and Thr-98–Glu-123. 2 coiled-coil regions span residues Ser-70 to Ala-133 and Ala-231 to Ala-514. Residue Ser-533 is modified to Phosphoserine.

This sequence belongs to the ICR family. Interacts with ARAC11 in vitro. In terms of tissue distribution, expressed in flowers.

Acts as a scaffold, mediating interaction of ROPs with different proteins. This is Interactor of constitutive active ROPs 3 (ICR3) from Arabidopsis thaliana (Mouse-ear cress).